The primary structure comprises 417 residues: Serine hydroxymethyltransferase (417 aa).

Residues Leu121 and 125 to 127 (GHL) each bind (6S)-5,6,7,8-tetrahydrofolate. N6-(pyridoxal phosphate)lysine is present on Lys229. Residue 355–357 (SPF) coordinates (6S)-5,6,7,8-tetrahydrofolate.

This sequence belongs to the SHMT family. As to quaternary structure, homodimer. Requires pyridoxal 5'-phosphate as cofactor.

It localises to the cytoplasm. The enzyme catalyses (6R)-5,10-methylene-5,6,7,8-tetrahydrofolate + glycine + H2O = (6S)-5,6,7,8-tetrahydrofolate + L-serine. Its pathway is one-carbon metabolism; tetrahydrofolate interconversion. The protein operates within amino-acid biosynthesis; glycine biosynthesis; glycine from L-serine: step 1/1. Catalyzes the reversible interconversion of serine and glycine with tetrahydrofolate (THF) serving as the one-carbon carrier. This reaction serves as the major source of one-carbon groups required for the biosynthesis of purines, thymidylate, methionine, and other important biomolecules. Also exhibits THF-independent aldolase activity toward beta-hydroxyamino acids, producing glycine and aldehydes, via a retro-aldol mechanism. This Shewanella oneidensis (strain ATCC 700550 / JCM 31522 / CIP 106686 / LMG 19005 / NCIMB 14063 / MR-1) protein is Serine hydroxymethyltransferase.